We begin with the raw amino-acid sequence, 446 residues long: NADH-ubiquinone oxidoreductase chain 4 (446 aa).

Transmembrane regions (helical) follow at residues 4–24 (IILF…YWMV), 56–76 (MLSY…LLAS), 93–113 (IVIL…FMFY), 114–134 (LFFE…GYQP), 141–161 (VYLL…IFYV), 182–202 (LLYF…LVHL), 212–232 (PVSG…YGLL), 245–265 (YSFV…LVCL), 272–292 (ALIA…LLTM), 297–317 (LCGS…LFCL), 330–350 (MLIN…WFLL), 373–393 (IVSW…FSAA), and 426–446 (LLHW…ILWL).

It belongs to the complex I subunit 4 family.

Its subcellular location is the mitochondrion membrane. It catalyses the reaction a ubiquinone + NADH + 5 H(+)(in) = a ubiquinol + NAD(+) + 4 H(+)(out). Functionally, core subunit of the mitochondrial membrane respiratory chain NADH dehydrogenase (Complex I) that is believed to belong to the minimal assembly required for catalysis. Complex I functions in the transfer of electrons from NADH to the respiratory chain. The immediate electron acceptor for the enzyme is believed to be ubiquinone. The polypeptide is NADH-ubiquinone oxidoreductase chain 4 (mt:ND4) (Drosophila yakuba (Fruit fly)).